The primary structure comprises 213 residues: GrpE protein homolog, mitochondrial (213 aa).

The disordered stretch occupies residues 35–55 (STEKQPEEATEQKATESSPEV). A compositionally biased stretch (basic and acidic residues) spans 38–55 (KQPEEATEQKATESSPEV).

Belongs to the GrpE family. In terms of assembly, probable component of the PAM complex at least composed of a mitochondrial HSP70 protein, Roe1, TIM44, blp/TIM16 and TIM14.

It is found in the mitochondrion matrix. Functionally, essential component of the PAM complex, a complex required for the translocation of transit peptide-containing proteins from the inner membrane into the mitochondrial matrix in an ATP-dependent manner. Seems to control the nucleotide-dependent binding of mitochondrial HSP70 to substrate proteins. In Drosophila melanogaster (Fruit fly), this protein is GrpE protein homolog, mitochondrial (Roe1).